Here is a 133-residue protein sequence, read N- to C-terminus: Nickel-responsive regulator (133 aa).

The Ni(2+) site is built by H76, H87, H89, and C95.

This sequence belongs to the transcriptional regulatory CopG/NikR family. As to quaternary structure, homotetramer. It depends on Ni(2+) as a cofactor.

Functionally, transcriptional repressor of the nikABCDE operon. Is active in the presence of excessive concentrations of intracellular nickel. In Escherichia coli (strain SMS-3-5 / SECEC), this protein is Nickel-responsive regulator.